The chain runs to 416 residues: Multifunctional CCA protein (416 aa).

ATP-binding residues include G8 and R11. CTP-binding residues include G8 and R11. D21 and D23 together coordinate Mg(2+). Residues R91, R137, and R140 each coordinate ATP. Residues R91, R137, and R140 each coordinate CTP. In terms of domain architecture, HD spans 228–329; that stretch reads TGVHTLMVLA…VKIFDKADFW (102 aa).

It belongs to the tRNA nucleotidyltransferase/poly(A) polymerase family. Bacterial CCA-adding enzyme type 1 subfamily. In terms of assembly, monomer. Can also form homodimers and oligomers. It depends on Mg(2+) as a cofactor. Ni(2+) is required as a cofactor.

The enzyme catalyses a tRNA precursor + 2 CTP + ATP = a tRNA with a 3' CCA end + 3 diphosphate. It carries out the reaction a tRNA with a 3' CCA end + 2 CTP + ATP = a tRNA with a 3' CCACCA end + 3 diphosphate. Functionally, catalyzes the addition and repair of the essential 3'-terminal CCA sequence in tRNAs without using a nucleic acid template. Adds these three nucleotides in the order of C, C, and A to the tRNA nucleotide-73, using CTP and ATP as substrates and producing inorganic pyrophosphate. tRNA 3'-terminal CCA addition is required both for tRNA processing and repair. Also involved in tRNA surveillance by mediating tandem CCA addition to generate a CCACCA at the 3' terminus of unstable tRNAs. While stable tRNAs receive only 3'-terminal CCA, unstable tRNAs are marked with CCACCA and rapidly degraded. In Shewanella baltica (strain OS185), this protein is Multifunctional CCA protein.